Here is a 308-residue protein sequence, read N- to C-terminus: tRNA pseudouridine synthase B (308 aa).

Asp47 (nucleophile) is an active-site residue.

Belongs to the pseudouridine synthase TruB family. Type 1 subfamily.

The catalysed reaction is uridine(55) in tRNA = pseudouridine(55) in tRNA. Functionally, responsible for synthesis of pseudouridine from uracil-55 in the psi GC loop of transfer RNAs. This chain is tRNA pseudouridine synthase B, found in Xanthomonas axonopodis pv. citri (strain 306).